Reading from the N-terminus, the 449-residue chain is 1H-pyrrole-2-carbonyl-[peptidyl-carrier protein] chlorinase (449 aa).

9 residues coordinate FAD: Ala16, Glu35, Arg41, His43, Val44, Ser47, Arg123, Ile147, and Asp316. The chloride site is built by Ser327 and Gly328. Val329 contributes to the FAD binding site.

It belongs to the flavin-dependent halogenase family. As to quaternary structure, homodimer.

The enzyme catalyses (1H-pyrrole-2-carbonyl)-[peptidyl-carrier protein] + 2 FADH2 + 2 chloride + 2 O2 = (4,5-dichloro-1H-pyrrole-2-carbonyl)-[peptidyl-carrier protein] + 2 FAD + 4 H2O. It catalyses the reaction (1H-pyrrole-2-carbonyl)-[peptidyl-carrier protein] + FADH2 + chloride + O2 = (5-chloro-1H-pyrrole-2-carbonyl)-[peptidyl-carrier protein] + FAD + 2 H2O. The catalysed reaction is (5-chloro-1H-pyrrole-2-carbonyl)-[peptidyl-carrier protein] + FADH2 + chloride + O2 = (4,5-dichloro-1H-pyrrole-2-carbonyl)-[peptidyl-carrier protein] + FAD + 2 H2O. It functions in the pathway antibiotic biosynthesis. In terms of biological role, involved in the biosynthesis of the antibiotic pyoluteorin. Catalyzes the dichlorination of the pyrrole ring of pyrrolyl-S-PltL, generating the 5-chloropyrrolyl-S-PltL intermediate and then the 4,5-dichloropyrrolyl-S-PltL product. The chain is 1H-pyrrole-2-carbonyl-[peptidyl-carrier protein] chlorinase from Pseudomonas fluorescens (strain ATCC BAA-477 / NRRL B-23932 / Pf-5).